Here is a 242-residue protein sequence, read N- to C-terminus: MYPDNFYSSTFTLLAEAEVGKHFYWDIAGFLVHGQVLVVVWFVLALLLLFAVLGTRDIDRIPNSWQNFAESAVDFVTDIARDQLGESFYREWVPFIGTLFLFIFGCNWAGAIIPWKLIELPEGELAAPTNDINTTVALALLTSLAYFYAGLSKKGFGYFKRYIQPIPLLLPINILEDFTKPLSLSFRLFGNVLADELTITVLTSLVPLVIPLPIMALGIFAGSVQALIFSTLAAAYIAEALE.

Helical transmembrane passes span 34–54, 93–113, 132–152, 188–210, and 222–242; these read GQVL…AVLG, VPFI…GAII, INTT…AGLS, LFGN…PLVI, and GSVQ…EALE.

It belongs to the ATPase A chain family. F-type ATPases have 2 components, CF(1) - the catalytic core - and CF(0) - the membrane proton channel. CF(1) has five subunits: alpha(3), beta(3), gamma(1), delta(1), epsilon(1). CF(0) has four main subunits: a, b, b' and c.

It localises to the plastid. Its subcellular location is the chloroplast thylakoid membrane. In terms of biological role, key component of the proton channel; it plays a direct role in the translocation of protons across the membrane. The sequence is that of ATP synthase subunit a, chloroplastic from Trieres chinensis (Marine centric diatom).